The primary structure comprises 264 residues: Undecaprenyl-diphosphatase 2 (264 aa).

Helical transmembrane passes span 29–49, 77–97, 107–127, 137–157, 180–200, 212–232, and 243–263; these read GSAFSAAMQLAALAAVISYFW, SWIVLATIPIVIAGVALSGVL, LTVIGWSCIAMAILLALAEIF, ASLADALLVGVAQIGALIPGV, FSFLLGLPAIALAGLKELWEL, VLATGLVVASISAFFAIWGLM, and FVIYRGLLGVVLLLGLAMGWL.

It belongs to the UppP family.

The protein localises to the cell inner membrane. The catalysed reaction is di-trans,octa-cis-undecaprenyl diphosphate + H2O = di-trans,octa-cis-undecaprenyl phosphate + phosphate + H(+). Catalyzes the dephosphorylation of undecaprenyl diphosphate (UPP). Confers resistance to bacitracin. This is Undecaprenyl-diphosphatase 2 from Mesorhizobium japonicum (strain LMG 29417 / CECT 9101 / MAFF 303099) (Mesorhizobium loti (strain MAFF 303099)).